We begin with the raw amino-acid sequence, 327 residues long: DNA-directed RNA polymerase subunit alpha (327 aa).

An alpha N-terminal domain (alpha-NTD) region spans residues 1–233 (MVREKVKVST…NLFIPFLHVE (233 aa)). Positions 267–327 (LAFQYIFIDQ…KKILDILEKK (61 aa)) are alpha C-terminal domain (alpha-CTD).

Belongs to the RNA polymerase alpha chain family. In terms of assembly, in plastids the minimal PEP RNA polymerase catalytic core is composed of four subunits: alpha, beta, beta', and beta''. When a (nuclear-encoded) sigma factor is associated with the core the holoenzyme is formed, which can initiate transcription.

Its subcellular location is the plastid. It localises to the chloroplast. The enzyme catalyses RNA(n) + a ribonucleoside 5'-triphosphate = RNA(n+1) + diphosphate. DNA-dependent RNA polymerase catalyzes the transcription of DNA into RNA using the four ribonucleoside triphosphates as substrates. This Crucihimalaya wallichii (Rock-cress) protein is DNA-directed RNA polymerase subunit alpha.